A 360-amino-acid chain; its full sequence is Membrane-bound lytic murein transglycosylase C (360 aa).

The signal sequence occupies residues Met-1–Ser-16. Residue Cys-17 is the site of N-palmitoyl cysteine attachment. Residue Cys-17 is the site of S-diacylglycerol cysteine attachment.

Belongs to the transglycosylase Slt family.

Its subcellular location is the cell outer membrane. The catalysed reaction is Exolytic cleavage of the (1-&gt;4)-beta-glycosidic linkage between N-acetylmuramic acid (MurNAc) and N-acetylglucosamine (GlcNAc) residues in peptidoglycan, from either the reducing or the non-reducing ends of the peptidoglycan chains, with concomitant formation of a 1,6-anhydrobond in the MurNAc residue.. In terms of biological role, murein-degrading enzyme. May play a role in recycling of muropeptides during cell elongation and/or cell division. This Salmonella arizonae (strain ATCC BAA-731 / CDC346-86 / RSK2980) protein is Membrane-bound lytic murein transglycosylase C.